A 222-amino-acid polypeptide reads, in one-letter code: Beta-casein (222 aa).

An N-terminal signal peptide occupies residues 1 to 15 (MKVLILACLVALAIA). Thr27 bears the Phosphothreonine mark. Ser30, Ser32, Ser33, and Ser34 each carry phosphoserine.

This sequence belongs to the beta-casein family. In terms of tissue distribution, mammary gland specific. Secreted in milk.

It is found in the secreted. Its function is as follows. Important role in determination of the surface properties of the casein micelles. This is Beta-casein (CSN2) from Capra hircus (Goat).